A 151-amino-acid polypeptide reads, in one-letter code: uncharacterized protein (151 aa).

To M.jannaschii MJ1244 and MJ1245.

This is an uncharacterized protein from Methanothermobacter thermautotrophicus (strain ATCC 29096 / DSM 1053 / JCM 10044 / NBRC 100330 / Delta H) (Methanobacterium thermoautotrophicum).